The chain runs to 332 residues: Glycerol-3-phosphate dehydrogenase [NAD(P)+] (332 aa).

Residues Trp-15, Arg-35, and Lys-108 each contribute to the NADPH site. The sn-glycerol 3-phosphate site is built by Lys-108, Gly-137, and Ser-139. Ala-141 is an NADPH binding site. The sn-glycerol 3-phosphate site is built by Lys-192, Asp-245, Ser-255, Arg-256, and Asn-257. Lys-192 (proton acceptor) is an active-site residue. NADPH is bound at residue Arg-256. Leu-278 and Glu-280 together coordinate NADPH.

It belongs to the NAD-dependent glycerol-3-phosphate dehydrogenase family.

The protein localises to the cytoplasm. It carries out the reaction sn-glycerol 3-phosphate + NAD(+) = dihydroxyacetone phosphate + NADH + H(+). The enzyme catalyses sn-glycerol 3-phosphate + NADP(+) = dihydroxyacetone phosphate + NADPH + H(+). The protein operates within membrane lipid metabolism; glycerophospholipid metabolism. In terms of biological role, catalyzes the reduction of the glycolytic intermediate dihydroxyacetone phosphate (DHAP) to sn-glycerol 3-phosphate (G3P), the key precursor for phospholipid synthesis. This is Glycerol-3-phosphate dehydrogenase [NAD(P)+] from Methylobacterium radiotolerans (strain ATCC 27329 / DSM 1819 / JCM 2831 / NBRC 15690 / NCIMB 10815 / 0-1).